The sequence spans 349 residues: Heat-inducible transcription repressor HrcA (349 aa).

Belongs to the HrcA family.

Functionally, negative regulator of class I heat shock genes (grpE-dnaK-dnaJ and groELS operons). Prevents heat-shock induction of these operons. This chain is Heat-inducible transcription repressor HrcA, found in Xylella fastidiosa (strain 9a5c).